Consider the following 643-residue polypeptide: Threonine--tRNA ligase (643 aa).

The 61-residue stretch at 1 to 61 (MIKITLKDGS…NEDSSLEICT (61 aa)) folds into the TGS domain. Positions 240–540 (DHNKLGRELG…LIEKYAGALP (301 aa)) are catalytic. Residues Cys335, His386, and His517 each coordinate Zn(2+).

This sequence belongs to the class-II aminoacyl-tRNA synthetase family. In terms of assembly, homodimer. It depends on Zn(2+) as a cofactor.

It is found in the cytoplasm. The catalysed reaction is tRNA(Thr) + L-threonine + ATP = L-threonyl-tRNA(Thr) + AMP + diphosphate + H(+). Its function is as follows. Catalyzes the attachment of threonine to tRNA(Thr) in a two-step reaction: L-threonine is first activated by ATP to form Thr-AMP and then transferred to the acceptor end of tRNA(Thr). Also edits incorrectly charged L-seryl-tRNA(Thr). In Clostridium perfringens (strain ATCC 13124 / DSM 756 / JCM 1290 / NCIMB 6125 / NCTC 8237 / Type A), this protein is Threonine--tRNA ligase.